A 134-amino-acid polypeptide reads, in one-letter code: Arsenate reductase (134 aa).

Residues C11, C83, and C90 each act as nucleophile in the active site. 2 disulfide bridges follow: C11-C83 and C83-C90.

This sequence belongs to the low molecular weight phosphotyrosine protein phosphatase family. Thioredoxin-coupled ArsC subfamily.

It is found in the cytoplasm. The enzyme catalyses arsenate + [thioredoxin]-dithiol + H(+) = arsenite + [thioredoxin]-disulfide + H2O. In terms of biological role, catalyzes the reduction of arsenate [As(V)] to arsenite [As(III)]. This chain is Arsenate reductase, found in Bacillus cereus (strain ATCC 14579 / DSM 31 / CCUG 7414 / JCM 2152 / NBRC 15305 / NCIMB 9373 / NCTC 2599 / NRRL B-3711).